Consider the following 1140-residue polypeptide: uncharacterized protein (1140 aa).

A run of 2 helical transmembrane segments spans residues 8-28 (FLLF…SAFT) and 1098-1118 (IAIT…SGVV).

To M.pneumoniae MPN_375 (in the N-terminal section), M.pneumoniae MPN_374 (in the central section) and M.pneumoniae MPN_373 (in the C-terminal section).

Its subcellular location is the cell membrane. This is an uncharacterized protein from Mycoplasma pneumoniae (strain ATCC 29342 / M129 / Subtype 1) (Mycoplasmoides pneumoniae).